The chain runs to 197 residues: Endoribonuclease YbeY (197 aa).

Residues H156, H160, and H166 each coordinate Zn(2+).

The protein belongs to the endoribonuclease YbeY family. Requires Zn(2+) as cofactor.

Its subcellular location is the cytoplasm. Its function is as follows. Single strand-specific metallo-endoribonuclease involved in late-stage 70S ribosome quality control and in maturation of the 3' terminus of the 16S rRNA. This is Endoribonuclease YbeY from Cupriavidus metallidurans (strain ATCC 43123 / DSM 2839 / NBRC 102507 / CH34) (Ralstonia metallidurans).